The chain runs to 467 residues: Sodium-dependent phosphate transport protein 1 (467 aa).

N-linked (GlcNAc...) asparagine glycosylation is found at Asn-41, Asn-49, and Asn-58. The next 10 helical transmembrane spans lie at 81-101, 119-139, 178-198, 200-220, 257-277, 301-321, 339-359, 365-385, 401-421, and 433-453; these read GIIL…VGYF, SVLS…VVVC, FLLG…SLGW, MVFY…FVLF, AILK…FFWS, GFLS…AGQL, LFTA…PYLS, IVIF…GVFI, CSTL…GLIL, and FILM…VATA.

The protein belongs to the major facilitator superfamily. Sodium/anion cotransporter family. In terms of assembly, interacts with PDZK1. Expressed in kidney cortex, liver and brain but not in other tissues.

The protein localises to the apical cell membrane. The enzyme catalyses 3 Na(+)(out) + phosphate(out) = 3 Na(+)(in) + phosphate(in). It carries out the reaction urate(out) = urate(in). Functionally, important for the resorption of phosphate by the kidney. May be involved in actively transporting phosphate into cells via Na(+) cotransport in the renal brush border membrane. Plays a role in urate transport in the kidney. The chain is Sodium-dependent phosphate transport protein 1 (SLC17A1) from Homo sapiens (Human).